Here is a 257-residue protein sequence, read N- to C-terminus: NAD-capped RNA hydrolase NudC (257 aa).

Substrate-binding residues include lysine 25 and arginine 69. Zn(2+)-binding residues include cysteine 98 and cysteine 101. Glutamate 111 is a binding site for substrate. Residues cysteine 116 and cysteine 119 each coordinate Zn(2+). Residue tyrosine 124 participates in substrate binding. The Nudix hydrolase domain maps to 125 to 248 (PQIAPCIIVA…TVARRLIEDT (124 aa)). A divalent metal cation-binding residues include alanine 158, glutamate 174, and glutamate 178. The short motif at 159–180 (GFVEVGETLEQAVAREVMEESG) is the Nudix box element. A substrate-binding site is contributed by 192-199 (QPWPFPQS). Glutamate 219 contributes to the a divalent metal cation binding site. A substrate-binding site is contributed by alanine 241.

This sequence belongs to the Nudix hydrolase family. NudC subfamily. Homodimer. It depends on Mg(2+) as a cofactor. Mn(2+) serves as cofactor. The cofactor is Zn(2+).

It carries out the reaction a 5'-end NAD(+)-phospho-ribonucleoside in mRNA + H2O = a 5'-end phospho-adenosine-phospho-ribonucleoside in mRNA + beta-nicotinamide D-ribonucleotide + 2 H(+). The catalysed reaction is NAD(+) + H2O = beta-nicotinamide D-ribonucleotide + AMP + 2 H(+). The enzyme catalyses NADH + H2O = reduced beta-nicotinamide D-ribonucleotide + AMP + 2 H(+). Its function is as follows. mRNA decapping enzyme that specifically removes the nicotinamide adenine dinucleotide (NAD) cap from a subset of mRNAs by hydrolyzing the diphosphate linkage to produce nicotinamide mononucleotide (NMN) and 5' monophosphate mRNA. The NAD-cap is present at the 5'-end of some mRNAs and stabilizes RNA against 5'-processing. Has preference for mRNAs with a 5'-end purine. Catalyzes the hydrolysis of a broad range of dinucleotide pyrophosphates. In Escherichia coli O45:K1 (strain S88 / ExPEC), this protein is NAD-capped RNA hydrolase NudC.